The sequence spans 1453 residues: Leucine-rich repeat-containing protein 9 (1453 aa).

LRR repeat units lie at residues 53–78, 97–119, 120–141, 142–164, 166–188, 224–248, and 264–287; these read FPNL…CLQL, CRNL…LEKL, IKLK…LQTL, KNLK…LDSN, QLER…NLTR, LQRF…AMKK, and KEDL…RVKL. Residues 302-321 form a disordered region; it reads LKGSGKGHSDGSNNSKVTDP. LRR repeat units lie at residues 344–367, 671–693, 694–715, 716–737, 739–758, 759–784, 786–812, 886–908, 909–930, 931–952, 953–975, 976–1001, 1023–1048, 1092–1115, 1116–1138, 1139–1161, 1201–1224, 1225–1247, 1248–1270, 1272–1292, 1293–1317, 1319–1345, and 1365–1388; these read LNAL…IYHI, KARP…TSVY, SHIV…LSKL, TGLR…VYHL, NLEY…GFRG, LMKL…MLCK, TTSL…VIGR, YLKI…LEKL, ENLK…LESC, INLE…ISKM, TKLT…TFDN, MLHL…SFTL, LCNL…LFVI, FKQM…PVDQ, FRNV…LIYL, PNVK…LKPQ, MHSL…QLNR, LRNL…LDNL, VVLQ…AFAK, SSLL…KLQS, LVKL…KLDV, STLR…IFRL, and EFHL…PMDG.

The protein is Leucine-rich repeat-containing protein 9 (LRRC9) of Homo sapiens (Human).